The chain runs to 258 residues: Snake venom serine protease HS114 (258 aa).

Positions 1–18 are cleaved as a signal peptide; that stretch reads MVLVRVVANLLILQLSYA. Positions 19–24 are excised as a propeptide; the sequence is QKVSEL. The Peptidase S1 domain maps to 25-249; sequence VVGGDECNIN…YNTWIESVIA (225 aa). 6 disulfides stabilise this stretch: Cys31/Cys163, Cys50/Cys66, Cys98/Cys256, Cys142/Cys210, Cys174/Cys189, and Cys200/Cys225. N-linked (GlcNAc...) asparagine glycosylation occurs at Asn44. Active-site charge relay system residues include His65 and Asp110. Ser204 serves as the catalytic Charge relay system.

This sequence belongs to the peptidase S1 family. Snake venom subfamily. As to quaternary structure, monomer. Post-translationally, N-glycosylated. Contains approximately 10% carbohydrates. In terms of tissue distribution, expressed by the venom gland.

It is found in the secreted. Inhibited by benzamidine, PMSF, leupeptin, SDS and DTT, but not by EDTA, and commercial antivenom. Snake venom serine protease that shows non-specific action on fibrinogen. It preferentially degrades fibrinogen Aalpha (FGA), releasing fibrinopeptide A, and shows a lower activity on fibrinogen Bbeta (FGB), releasing fibrinopeptide B and other uncommon fibrinopeptides. Also shows low fibrinolytic activity compared to plasmin. Has high enzymatic activity on the substrates for activated protein C and factor XIa, and for thrombin. Shows a wide activity spectrum at different peptide sequences, with a preferential cleavage at Lys-|-Xaa over Arg-|-Xaa bonds. This is Snake venom serine protease HS114 from Bothrops jararaca (Jararaca).